The chain runs to 54 residues: Rubredoxin (54 aa).

The Rubredoxin-like domain maps to 2-52; it reads AKWVCKICGYIYDEDAGDPDNGISPGTKFEELPDDWVCPICGAPKSEFEKL. Fe cation is bound by residues C6, C9, C39, and C42.

The protein belongs to the rubredoxin family. Requires Fe(3+) as cofactor.

Its function is as follows. Rubredoxin is a small nonheme, iron protein lacking acid-labile sulfide. Its single Fe, chelated to 4 Cys, functions as an electron acceptor and may also stabilize the conformation of the molecule. The chain is Rubredoxin (rub) from Pyrococcus furiosus (strain ATCC 43587 / DSM 3638 / JCM 8422 / Vc1).